A 234-amino-acid polypeptide reads, in one-letter code: Triggering receptor expressed on myeloid cells 1 (234 aa).

The first 20 residues, 1–20 (MRKTRLWGLLWMLFVSELRA), serve as a signal peptide directing secretion. At 21–205 (ATKLTEEKYE…TDIIRVPVFN (185 aa)) the chain is on the extracellular side. The Ig-like V-type domain occupies 26–134 (EEKYELKEGQ…LFDRIRLVVT (109 aa)). Cysteines 41 and 113 form a disulfide. N-linked (GlcNAc...) asparagine glycosylation is found at Asn-146, Asn-191, and Asn-194. A helical transmembrane segment spans residues 206–226 (IVILLAGGFLSKSLVFSVLFA). Residues 227–234 (VTLRSFVP) are Cytoplasmic-facing.

Monomer. Homomultimer; when activated. Interacts with TYROBP/DAP12. Interacts with TLR4. Glycosylated. In terms of tissue distribution, mostly expressed by immune cells of the myeloid lineage, such as monocytes, macrophages, neutrophils and dendritic cells. Expression is associated with a mature stage of myeloid development. Highly expressed in adult liver, lung and spleen than in corresponding fetal tissue. Also expressed in the lymph node, placenta, spinal cord and heart tissues. Isoform 2 was detected in the lung, liver and mature monocytes.

It localises to the cell membrane. Its subcellular location is the secreted. In terms of biological role, cell surface receptor that plays important roles in innate and adaptive immunity by amplifying inflammatory responses. Upon activation by various ligands such as PGLYRP1, HMGB1 or HSP70, multimerizes and forms a complex with transmembrane adapter TYROBP/DAP12. In turn, initiates a SYK-mediated cascade of tyrosine phosphorylation, activating multiple downstream mediators such as BTK, MAPK1, MAPK3 or phospholipase C-gamma. This cascade promotes the neutrophil- and macrophage-mediated release of pro-inflammatory cytokines and/or chemokines, as well as their migration and thereby amplifies inflammatory responses that are triggered by bacterial and fungal infections. By also promoting the amplification of inflammatory signals that are initially triggered by Toll-like receptor (TLR) and NOD-like receptor engagement, plays a major role in the pathophysiology of acute and chronic inflammatory diseases of different etiologies including septic shock and atherosclerosis. Its function is as follows. Acts as a decoy receptor, counterbalancing TREM1 pro-inflammatory activity through the neutralization of its ligand. This Homo sapiens (Human) protein is Triggering receptor expressed on myeloid cells 1 (TREM1).